We begin with the raw amino-acid sequence, 739 residues long: Phosphoribosylformylglycinamidine synthase subunit PurL (739 aa).

His53 is an active-site residue. ATP is bound by residues Tyr56 and Lys95. Residue Glu97 coordinates Mg(2+). Residues 98–101 (SHNH) and Arg120 contribute to the substrate site. His99 functions as the Proton acceptor in the catalytic mechanism. A Mg(2+)-binding site is contributed by Asp121. Gln244 provides a ligand contact to substrate. Asp274 contacts Mg(2+). 318-320 (ESQ) is a binding site for substrate. The ATP site is built by Asp501 and Gly538. Asn539 is a Mg(2+) binding site. Position 541 (Ser541) interacts with substrate.

It belongs to the FGAMS family. As to quaternary structure, monomer. Part of the FGAM synthase complex composed of 1 PurL, 1 PurQ and 2 PurS subunits.

Its subcellular location is the cytoplasm. It carries out the reaction N(2)-formyl-N(1)-(5-phospho-beta-D-ribosyl)glycinamide + L-glutamine + ATP + H2O = 2-formamido-N(1)-(5-O-phospho-beta-D-ribosyl)acetamidine + L-glutamate + ADP + phosphate + H(+). Its pathway is purine metabolism; IMP biosynthesis via de novo pathway; 5-amino-1-(5-phospho-D-ribosyl)imidazole from N(2)-formyl-N(1)-(5-phospho-D-ribosyl)glycinamide: step 1/2. In terms of biological role, part of the phosphoribosylformylglycinamidine synthase complex involved in the purines biosynthetic pathway. Catalyzes the ATP-dependent conversion of formylglycinamide ribonucleotide (FGAR) and glutamine to yield formylglycinamidine ribonucleotide (FGAM) and glutamate. The FGAM synthase complex is composed of three subunits. PurQ produces an ammonia molecule by converting glutamine to glutamate. PurL transfers the ammonia molecule to FGAR to form FGAM in an ATP-dependent manner. PurS interacts with PurQ and PurL and is thought to assist in the transfer of the ammonia molecule from PurQ to PurL. This chain is Phosphoribosylformylglycinamidine synthase subunit PurL, found in Listeria monocytogenes serotype 4b (strain F2365).